Here is a 119-residue protein sequence, read N- to C-terminus: 5-hydroxyisourate hydrolase (119 aa).

3 residues coordinate substrate: His-8, Arg-47, and Tyr-116.

The protein belongs to the transthyretin family. 5-hydroxyisourate hydrolase subfamily. Homotetramer.

The catalysed reaction is 5-hydroxyisourate + H2O = 5-hydroxy-2-oxo-4-ureido-2,5-dihydro-1H-imidazole-5-carboxylate + H(+). The protein operates within purine metabolism; urate degradation; (S)-allantoin from urate: step 2/3. In terms of biological role, catalyzes the hydrolysis of 5-hydroxyisourate (HIU) to 2-oxo-4-hydroxy-4-carboxy-5-ureidoimidazoline (OHCU). The polypeptide is 5-hydroxyisourate hydrolase (Halalkalibacterium halodurans (strain ATCC BAA-125 / DSM 18197 / FERM 7344 / JCM 9153 / C-125) (Bacillus halodurans)).